The chain runs to 161 residues: Putative 4-hydroxy-4-methyl-2-oxoglutarate aldolase (161 aa).

Substrate contacts are provided by residues 75–78 and Arg97; that span reads GDQL. Asp98 is an a divalent metal cation binding site.

Belongs to the class II aldolase/RraA-like family. As to quaternary structure, homotrimer. A divalent metal cation is required as a cofactor.

It carries out the reaction 4-hydroxy-4-methyl-2-oxoglutarate = 2 pyruvate. It catalyses the reaction oxaloacetate + H(+) = pyruvate + CO2. Catalyzes the aldol cleavage of 4-hydroxy-4-methyl-2-oxoglutarate (HMG) into 2 molecules of pyruvate. Also contains a secondary oxaloacetate (OAA) decarboxylase activity due to the common pyruvate enolate transition state formed following C-C bond cleavage in the retro-aldol and decarboxylation reactions. The sequence is that of Putative 4-hydroxy-4-methyl-2-oxoglutarate aldolase from Vibrio cholerae serotype O1 (strain ATCC 39315 / El Tor Inaba N16961).